An 872-amino-acid polypeptide reads, in one-letter code: Extended synaptotagmin-2-A (872 aa).

The interval 1–25 (MSSESSAEKGPPPSPAENVQPGVPP) is disordered. Residues 1 to 31 (MSSESSAEKGPPPSPAENVQPGVPPAAEEPG) lie on the Cytoplasmic side of the membrane. Residues 32 to 52 (MISVDIAGLFYQFSKTFILIF) traverse the membrane as a helical segment. The Lumenal portion of the chain corresponds to 53–55 (PVY). A helical transmembrane segment spans residues 56-76 (VLGYFGLSFSWLLIALVLLLW). Residues 77 to 872 (WRRNKGNKNS…EDGTRPAVSS (796 aa)) lie on the Cytoplasmic side of the membrane. Residues 119–298 (DIERAEWLNK…LPNRITVPLV (180 aa)) form the SMP-LTD domain. C2 domains follow at residues 297 to 417 (LVSD…DEWF) and 442 to 588 (NLDQ…HLNN). Ca(2+) is bound by residues Lys328, Asp329, Asp341, Asp388, Glu389, Asp390, Asp392, Asp394, and Asp395. The span at 608–617 (KPVRSPDEQH) shows a compositional bias: basic and acidic residues. Residues 608-711 (KPVRSPDEQH…EPTPSIASDI (104 aa)) are disordered. Residues 632-652 (PPTPQMPSPSPAVAHKPPPTP) show a composition bias toward pro residues. Residues 664 to 681 (NKGTPPSASPKSPTELHQ) show a composition bias toward polar residues. Residues 682–696 (SSSSLSGSSFTYSPS) show a composition bias toward low complexity. The C2 3 domain occupies 737-859 (PLGQIQLTIR…DAAKGWTQWY (123 aa)). Positions 784 to 791 (KRRSGRRK) are required for phosphatidylinositol 4,5-bisphosphate-dependent location at the cell membrane.

This sequence belongs to the extended synaptotagmin family. As to quaternary structure, interacts with fgfr1 that has been activated by fgf1 binding. Interacts (via C2 domains) with the AP-2 complex (via an alpha subunit). Identified in a complex with the AP-2 complex and fgfr1.

The protein localises to the cell membrane. Its subcellular location is the endoplasmic reticulum membrane. In terms of biological role, tethers the endoplasmic reticulum to the cell membrane and promotes the formation of appositions between the endoplasmic reticulum and the cell membrane. Binds glycerophospholipids in a barrel-like domain and may play a role in cellular lipid transport. Plays a role in the rapid internalization of fgfr1 that has been activated by fgf1 binding; this occurs most likely via the AP-2 complex. Required for normal fgf signaling and the activation of downstream signaling cascades via its role in the internalization of activated fgfr1. Required for normal embryonic development via its role in fgf signaling and the downstream regulation of t/xBRA expression. This is Extended synaptotagmin-2-A (esyt2-a) from Xenopus laevis (African clawed frog).